We begin with the raw amino-acid sequence, 153 residues long: Lipoprotein signal peptidase (153 aa).

3 helical membrane-spanning segments follow: residues Ile-11 to Val-31, Asp-39 to Leu-59, and Leu-68 to Ile-88. Active-site residues include Asp-112 and Asp-129. The helical transmembrane segment at Phe-122–Leu-142 threads the bilayer.

Belongs to the peptidase A8 family.

Its subcellular location is the cell inner membrane. The enzyme catalyses Release of signal peptides from bacterial membrane prolipoproteins. Hydrolyzes -Xaa-Yaa-Zaa-|-(S,diacylglyceryl)Cys-, in which Xaa is hydrophobic (preferably Leu), and Yaa (Ala or Ser) and Zaa (Gly or Ala) have small, neutral side chains.. The protein operates within protein modification; lipoprotein biosynthesis (signal peptide cleavage). Functionally, this protein specifically catalyzes the removal of signal peptides from prolipoproteins. In Sulfurimonas denitrificans (strain ATCC 33889 / DSM 1251) (Thiomicrospira denitrificans (strain ATCC 33889 / DSM 1251)), this protein is Lipoprotein signal peptidase.